A 291-amino-acid chain; its full sequence is Nucleotide-binding protein Athe_0320 (291 aa).

9-16 (GMSGAGKS) contacts ATP. Position 60–63 (60–63 (DIRG)) interacts with GTP.

The protein belongs to the RapZ-like family.

In terms of biological role, displays ATPase and GTPase activities. In Caldicellulosiruptor bescii (strain ATCC BAA-1888 / DSM 6725 / KCTC 15123 / Z-1320) (Anaerocellum thermophilum), this protein is Nucleotide-binding protein Athe_0320.